Reading from the N-terminus, the 354-residue chain is Chaperone protein dnaJ 49 (354 aa).

Residues 99 to 163 (DYYAILGLEK…NSRRQFDQVG (65 aa)) form the J domain. The helical transmembrane segment at 237 to 257 (CLTIIQILPFFLLLLLAYLPF) threads the bilayer.

Belongs to the DnaJ family. C/III subfamily.

The protein localises to the membrane. Its function is as follows. Plays a continuous role in plant development probably in the structural organization of compartments. The polypeptide is Chaperone protein dnaJ 49 (ATJ49) (Arabidopsis thaliana (Mouse-ear cress)).